A 334-amino-acid chain; its full sequence is N-acetyl-gamma-glutamyl-phosphate reductase (334 aa).

Cysteine 154 is an active-site residue.

This sequence belongs to the NAGSA dehydrogenase family. Type 1 subfamily.

It is found in the cytoplasm. It catalyses the reaction N-acetyl-L-glutamate 5-semialdehyde + phosphate + NADP(+) = N-acetyl-L-glutamyl 5-phosphate + NADPH + H(+). The protein operates within amino-acid biosynthesis; L-arginine biosynthesis; N(2)-acetyl-L-ornithine from L-glutamate: step 3/4. Functionally, catalyzes the NADPH-dependent reduction of N-acetyl-5-glutamyl phosphate to yield N-acetyl-L-glutamate 5-semialdehyde. The protein is N-acetyl-gamma-glutamyl-phosphate reductase of Pectobacterium carotovorum subsp. carotovorum (strain PC1).